A 346-amino-acid chain; its full sequence is Probable alpha-1,2-galactosyltransferase gmh2 (346 aa).

Over 1 to 11 the chain is Cytoplasmic; sequence MALMLSRIPRR. Residues 12 to 32 form a helical; Signal-anchor for type II membrane protein membrane-spanning segment; the sequence is FFFLFLTVGLIAGAFLYSLIY. Residues 33 to 346 are Lumenal-facing; sequence FVDVDLVSKV…LWQKFYALID (314 aa). Asparagine 64, asparagine 142, and asparagine 224 each carry an N-linked (GlcNAc...) asparagine glycan.

The protein belongs to the glycosyltransferase 34 family.

It localises to the golgi apparatus membrane. This Schizosaccharomyces pombe (strain 972 / ATCC 24843) (Fission yeast) protein is Probable alpha-1,2-galactosyltransferase gmh2 (gmh2).